Reading from the N-terminus, the 600-residue chain is Mitoguardin 1 (600 aa).

The next 2 helical transmembrane spans lie at 15–32 and 38–58; these read TYAV…YSLS and PVAK…IFLA. Phosphoserine occurs at positions 257 and 261.

Belongs to the mitoguardin family. In terms of assembly, homodimer and heterodimer; forms heterodimers with MIGA2. Interacts with PLD6/MitoPLD.

It is found in the mitochondrion outer membrane. In terms of biological role, regulator of mitochondrial fusion. Acts by forming homo- and heterodimers at the mitochondrial outer membrane and facilitating the formation of PLD6/MitoPLD dimers. May act by regulating phospholipid metabolism via PLD6/MitoPLD. In Mus musculus (Mouse), this protein is Mitoguardin 1.